We begin with the raw amino-acid sequence, 20 residues long: Apidaecin 2+ (20 aa).

Residues 1 to 13 are compositionally biased toward pro residues; it reads GKPNKPRPAPIKP. The interval 1–20 is disordered; it reads GKPNKPRPAPIKPRPPHPRL.

It is found in the secreted. Antimicrobial peptide active against many Gram-negative enterobacterial and plant-associated bacterial species. Not active against other bacterial species like H.pylori, P.mirabilis, B.pertussis or N.gonorrhoeae. This is Apidaecin 2+ from Pimpla disparis (Parasitic wasp).